The chain runs to 317 residues: MTSIVFMGTPAFAAPILESLIKEQYQVLGVVTQPDRKVGRKHVLTASPVKEVAVAHDIPVFQPEKISGSPEMQQIIDLQPDLIVTAAFGQFLPTKLLKAAKIGAVNVHGSLLPKYRGGAPVQYSIINGESETGITIIYMVKKMDAGDMLAQRAIPIEKNDDTGTMFDKLSLVGRDLLLETLPKLIAGEITAVPQDESQVTFAPNIQPEQEVLDFFTKTAVEIDNQVRGMRPAPIAYAVLDGKRTKFWDVTPLADEVVTQAPGQVVRKTKHELVIAAADHTAIAINQLQPAGKPKMTITDYLNGAADKFATGEQVINK.

110–113 (SLLP) is a binding site for (6S)-5,6,7,8-tetrahydrofolate.

The protein belongs to the Fmt family.

The enzyme catalyses L-methionyl-tRNA(fMet) + (6R)-10-formyltetrahydrofolate = N-formyl-L-methionyl-tRNA(fMet) + (6S)-5,6,7,8-tetrahydrofolate + H(+). In terms of biological role, attaches a formyl group to the free amino group of methionyl-tRNA(fMet). The formyl group appears to play a dual role in the initiator identity of N-formylmethionyl-tRNA by promoting its recognition by IF2 and preventing the misappropriation of this tRNA by the elongation apparatus. This is Methionyl-tRNA formyltransferase from Lactiplantibacillus plantarum (strain ATCC BAA-793 / NCIMB 8826 / WCFS1) (Lactobacillus plantarum).